The sequence spans 298 residues: Ribosomal RNA small subunit methyltransferase A (298 aa).

S-adenosyl-L-methionine is bound by residues asparagine 35, leucine 37, glycine 62, glutamate 83, aspartate 108, and asparagine 133.

The protein belongs to the class I-like SAM-binding methyltransferase superfamily. rRNA adenine N(6)-methyltransferase family. RsmA subfamily.

The protein resides in the cytoplasm. It catalyses the reaction adenosine(1518)/adenosine(1519) in 16S rRNA + 4 S-adenosyl-L-methionine = N(6)-dimethyladenosine(1518)/N(6)-dimethyladenosine(1519) in 16S rRNA + 4 S-adenosyl-L-homocysteine + 4 H(+). Specifically dimethylates two adjacent adenosines (A1518 and A1519) in the loop of a conserved hairpin near the 3'-end of 16S rRNA in the 30S particle. May play a critical role in biogenesis of 30S subunits. The sequence is that of Ribosomal RNA small subunit methyltransferase A from Streptococcus pyogenes serotype M2 (strain MGAS10270).